We begin with the raw amino-acid sequence, 1407 residues long: DNA-directed RNA polymerase subunit beta' (1407 aa).

4 residues coordinate Zn(2+): cysteine 70, cysteine 72, cysteine 85, and cysteine 88. Mg(2+)-binding residues include aspartate 460, aspartate 462, and aspartate 464. Residues cysteine 814, cysteine 888, cysteine 895, and cysteine 898 each coordinate Zn(2+).

This sequence belongs to the RNA polymerase beta' chain family. The RNAP catalytic core consists of 2 alpha, 1 beta, 1 beta' and 1 omega subunit. When a sigma factor is associated with the core the holoenzyme is formed, which can initiate transcription. Mg(2+) is required as a cofactor. Zn(2+) serves as cofactor.

It carries out the reaction RNA(n) + a ribonucleoside 5'-triphosphate = RNA(n+1) + diphosphate. In terms of biological role, DNA-dependent RNA polymerase catalyzes the transcription of DNA into RNA using the four ribonucleoside triphosphates as substrates. This chain is DNA-directed RNA polymerase subunit beta', found in Erwinia tasmaniensis (strain DSM 17950 / CFBP 7177 / CIP 109463 / NCPPB 4357 / Et1/99).